The primary structure comprises 427 residues: Putative acyl-CoA thioester hydrolase YbhC (427 aa).

Positions 1–21 (MNTFSVSRLALALAFGVTLTA) are cleaved as a signal peptide. Cys22 carries the N-palmitoyl cysteine lipid modification. Cys22 is lipidated: S-diacylglycerol cysteine. Residues 23–42 (SSTPPDQRPSDQTAPGTSSR) are disordered. Residues Cys185 and Cys197 are joined by a disulfide bond. Catalysis depends on Asp285, which acts as the Nucleophile. Arg345 is a binding site for substrate.

It belongs to the pectinesterase family.

It is found in the cell outer membrane. Functionally, putative thioesterase. Does not bind pectin, and has no pectinesterase activity. This is Putative acyl-CoA thioester hydrolase YbhC (ybhC) from Escherichia coli (strain K12).